We begin with the raw amino-acid sequence, 173 residues long: Co-chaperone protein HscB (173 aa).

The J domain maps to 2–74 (DYFTLLGMPN…LSRAEYMLSL (73 aa)).

The protein belongs to the HscB family. In terms of assembly, interacts with HscA and stimulates its ATPase activity. Interacts with IscU.

Co-chaperone involved in the maturation of iron-sulfur cluster-containing proteins. Seems to help targeting proteins to be folded toward HscA. The sequence is that of Co-chaperone protein HscB from Proteus mirabilis (strain HI4320).